The following is a 394-amino-acid chain: RHOMBOID-like protein 4 (394 aa).

The disordered stretch occupies residues 1–51; it reads MGEKDSETAPIWGKTRERERSNNNNIQPMDLESSSSVSGQQRSLTQSRSSY. Residues 39-49 show a composition bias toward polar residues; it reads GQQRSLTQSRS. Helical transmembrane passes span 64–84, 147–167, 175–195, 201–221, 231–251, 254–274, and 300–320; these read WFPW…VITM, WLHG…FIGI, FIRI…LSAL, ISVG…SEIF, VVTI…GVLP, DNFA…VLLI, and ILWT…LISL. Ser206 serves as the catalytic Nucleophile. His258 acts as the Charge relay system in catalysis.

Belongs to the peptidase S54 family.

The protein localises to the membrane. It catalyses the reaction Cleaves type-1 transmembrane domains using a catalytic dyad composed of serine and histidine that are contributed by different transmembrane domains.. Its function is as follows. Probable rhomboid-type serine protease that catalyzes intramembrane proteolysis. This chain is RHOMBOID-like protein 4, found in Arabidopsis thaliana (Mouse-ear cress).